Here is a 162-residue protein sequence, read N- to C-terminus: Large ribosomal subunit protein uL11 (162 aa).

Residues 1–27 form a disordered region; it reads MAGTIEVLVPGGEANPGPPLGPELGPT.

This sequence belongs to the universal ribosomal protein uL11 family. In terms of assembly, part of the 50S ribosomal subunit. Forms part of the ribosomal stalk which helps the ribosome interact with GTP-bound translation factors. Forms a heptameric L10(L12)2(L12)2(L12)2 complex, where L10 forms an elongated spine to which 3 L12 dimers bind in a sequential fashion.

Forms part of the ribosomal stalk which helps the ribosome interact with GTP-bound translation factors. This is Large ribosomal subunit protein uL11 from Haloarcula marismortui (strain ATCC 43049 / DSM 3752 / JCM 8966 / VKM B-1809) (Halobacterium marismortui).